The sequence spans 143 residues: Large ribosomal subunit protein uL15 (143 aa).

The tract at residues 1 to 54 (MELNSIKPAEGAKHAKRRVGRGIGSGLGKTAGRGHKGQKSRSGGYHKVGFEGGQ) is disordered. Residues 21–31 (RGIGSGLGKTA) show a composition bias toward gly residues.

Belongs to the universal ribosomal protein uL15 family. Part of the 50S ribosomal subunit.

Binds to the 23S rRNA. The chain is Large ribosomal subunit protein uL15 from Paracidovorax citrulli (strain AAC00-1) (Acidovorax citrulli).